Here is a 353-residue protein sequence, read N- to C-terminus: DNA-directed RNA polymerase subunit alpha (353 aa).

The segment at 1–226 is alpha N-terminal domain (alpha-NTD); sequence MLISQRPTLT…ELFGLARELN (226 aa). The tract at residues 241–353 is alpha C-terminal domain (alpha-CTD); the sequence is ADHIASFGLP…TEDYAETEQL (113 aa). The tract at residues 326-353 is disordered; the sequence is ATGTWSDTDAGSFGDAEGTEDYAETEQL. The segment covering 342–353 has biased composition (acidic residues); it reads EGTEDYAETEQL.

This sequence belongs to the RNA polymerase alpha chain family. Homodimer. The RNAP catalytic core consists of 2 alpha, 1 beta, 1 beta' and 1 omega subunit. When a sigma factor is associated with the core the holoenzyme is formed, which can initiate transcription.

It carries out the reaction RNA(n) + a ribonucleoside 5'-triphosphate = RNA(n+1) + diphosphate. DNA-dependent RNA polymerase catalyzes the transcription of DNA into RNA using the four ribonucleoside triphosphates as substrates. This chain is DNA-directed RNA polymerase subunit alpha, found in Rhodococcus jostii (strain RHA1).